Here is a 452-residue protein sequence, read N- to C-terminus: Transcription factor ETV6 (452 aa).

K11 carries the N6-acetyllysine; alternate modification. Residue K11 forms a Glycyl lysine isopeptide (Lys-Gly) (interchain with G-Cter in SUMO2); alternate linkage. T18 is subject to Phosphothreonine. S22 carries the post-translational modification Phosphoserine. The PNT domain occupies 40 to 124; that stretch reads ALRMEEDSIR…ELLQHILKQR (85 aa). The interval 154-262 is disordered; that stretch reads EDNGVQRTSR…PRPSSPRQEG (109 aa). The segment covering 158–174 has biased composition (polar residues); the sequence is VQRTSRPSAENVHQNPP. A phosphoserine mark is found at S213, S238, and S257. A Glycyl lysine isopeptide (Lys-Gly) (interchain with G-Cter in SUMO2) cross-link involves residue K288. Residue K302 is modified to N6-acetyllysine; alternate. K302 is covalently cross-linked (Glycyl lysine isopeptide (Lys-Gly) (interchain with G-Cter in SUMO2); alternate). Phosphoserine is present on S323. Positions 339–420 form a DNA-binding region, ETS; sequence RLLWDYVYQL…PGQRLLFRFM (82 aa). Residues K403 and K421 each participate in a glycyl lysine isopeptide (Lys-Gly) (interchain with G-Cter in SUMO2) cross-link.

Belongs to the ETS family. In terms of assembly, can form homodimers or heterodimers with TEL2 or FLI1. Interacts with L3MBTL1 and HDAC9.

It localises to the nucleus. Functionally, transcriptional repressor; binds to the DNA sequence 5'-CCGGAAGT-3'. Plays a role in hematopoiesis and malignant transformation. This Bos taurus (Bovine) protein is Transcription factor ETV6 (ETV6).